Reading from the N-terminus, the 203-residue chain is Transcriptional regulator GfcR 2 (203 aa).

It belongs to the purine/pyrimidine phosphoribosyltransferase family. GfcR subfamily.

In Methanosarcina acetivorans (strain ATCC 35395 / DSM 2834 / JCM 12185 / C2A), this protein is Transcriptional regulator GfcR 2.